Here is a 160-residue protein sequence, read N- to C-terminus: MRKVTLTLSAIALALSLNGAAMAKVHMPEVVSQGVTVTELAHQQPIKWVSVAEIEKSLEGQAPMAVGFDIDDTFWFSSPGFYRVKLEYSPNDFSYLKNPEFWEKMNNEWDKFSMPKQVGIDLVQMHLKRGDTVYFITGRTQTKTETCVTKYVQEGLNIPA.

An N-terminal signal peptide occupies residues 1–23; it reads MRKVTLTLSAIALALSLNGAAMA. The active-site Nucleophile is the Asp69. Mg(2+) is bound by residues Asp69 and Asp71. Residue Asp71 is the Proton donor of the active site. Residue 137-138 participates in substrate binding; it reads TG.

The protein belongs to the class B bacterial acid phosphatase family. Homotetramer. The cofactor is Mg(2+).

Its subcellular location is the periplasm. The enzyme catalyses a phosphate monoester + H2O = an alcohol + phosphate. In terms of biological role, dephosphorylates several organic phosphate monoesters. Also has a phosphotransferase activity catalyzing the transfer of low-energy phosphate groups from organic phosphate monoesters to free hydroxyl groups of various organic compounds. The sequence is that of Class B acid phosphatase (aphA) from Proteus mirabilis.